The sequence spans 549 residues: Glucose-6-phosphate isomerase (549 aa).

The active-site Proton donor is E355. Catalysis depends on residues H386 and K514.

Belongs to the GPI family.

The protein localises to the cytoplasm. It catalyses the reaction alpha-D-glucose 6-phosphate = beta-D-fructose 6-phosphate. Its pathway is carbohydrate biosynthesis; gluconeogenesis. It participates in carbohydrate degradation; glycolysis; D-glyceraldehyde 3-phosphate and glycerone phosphate from D-glucose: step 2/4. In terms of biological role, catalyzes the reversible isomerization of glucose-6-phosphate to fructose-6-phosphate. The chain is Glucose-6-phosphate isomerase from Salmonella choleraesuis (strain SC-B67).